The sequence spans 312 residues: Olfactory receptor 6C68 (312 aa).

Residues 1–23 (MRKHTAITTFILLGLTEDPQLQV) lie on the Extracellular side of the membrane. The helical transmembrane segment at 24–44 (LLFMFLFITYMLSVTGKLTII) threads the bilayer. Residues 45 to 55 (ALTMLDPHLKT) are Cytoplasmic-facing. A helical transmembrane segment spans residues 56-76 (PMYFFLQNLSFLEISFTATCV). At 77-95 (PRFLYSISTGNKIITYNAC) the chain is on the extracellular side. The cysteines at positions 95 and 177 are disulfide-linked. Residues 96-116 (VIQLFFADLFGVTEFFLLATM) form a helical membrane-spanning segment. Residues 117 to 143 (SYDRYVAICKPLHYMAIMSNKVCKTMV) are Cytoplasmic-facing. Residues 144 to 164 (ICCWMAALMIILPPLSLGFHL) form a helical membrane-spanning segment. The Extracellular portion of the chain corresponds to 165–197 (EFCDSNVINHFGCDALPILKIPCSDTSLIEQMV). The chain crosses the membrane as a helical span at residues 198-218 (VASAVLTFIITLVCVVLSYTY). At 219-239 (IIRTILKFPSVQQKKKAFSTC) the chain is on the cytoplasmic side. The chain crosses the membrane as a helical span at residues 240 to 260 (SSHITVVSITYGSCIFIYIKP). Topologically, residues 261 to 271 (SAKEEVNINKG) are extracellular. The helical transmembrane segment at 272-292 (VSVLISSISPMLNSFIYTLRN) threads the bilayer. The Cytoplasmic segment spans residues 293–312 (EQVKQAFHDSLKKIAFRLKK).

The protein belongs to the G-protein coupled receptor 1 family.

Its subcellular location is the cell membrane. Odorant receptor. This Homo sapiens (Human) protein is Olfactory receptor 6C68 (OR6C68).